A 416-amino-acid polypeptide reads, in one-letter code: Glutamate dehydrogenase (416 aa).

Lys-105 is an active-site residue.

It belongs to the Glu/Leu/Phe/Val dehydrogenases family. As to quaternary structure, homohexamer.

It carries out the reaction L-glutamate + NAD(+) + H2O = 2-oxoglutarate + NH4(+) + NADH + H(+). The enzyme catalyses L-glutamate + NADP(+) + H2O = 2-oxoglutarate + NH4(+) + NADPH + H(+). The chain is Glutamate dehydrogenase (gdhA) from Thermotoga maritima (strain ATCC 43589 / DSM 3109 / JCM 10099 / NBRC 100826 / MSB8).